A 429-amino-acid chain; its full sequence is S-adenosylmethionine synthase (429 aa).

H14 serves as a coordination point for ATP. D16 serves as a coordination point for Mg(2+). Position 42 (E42) interacts with K(+). Positions 55 and 98 each coordinate L-methionine. The flexible loop stretch occupies residues 98–108 (QSADINRGVDR). ATP contacts are provided by residues 165 to 167 (DAK), 252 to 253 (KF), D261, 267 to 268 (RK), A284, and K288. Position 261 (D261) interacts with L-methionine. L-methionine is bound at residue K292.

Belongs to the AdoMet synthase family. As to quaternary structure, homotetramer; dimer of dimers. The cofactor is Mg(2+). It depends on K(+) as a cofactor.

It localises to the cytoplasm. The catalysed reaction is L-methionine + ATP + H2O = S-adenosyl-L-methionine + phosphate + diphosphate. It participates in amino-acid biosynthesis; S-adenosyl-L-methionine biosynthesis; S-adenosyl-L-methionine from L-methionine: step 1/1. Functionally, catalyzes the formation of S-adenosylmethionine (AdoMet) from methionine and ATP. The overall synthetic reaction is composed of two sequential steps, AdoMet formation and the subsequent tripolyphosphate hydrolysis which occurs prior to release of AdoMet from the enzyme. This Porphyromonas gingivalis (strain ATCC 33277 / DSM 20709 / CIP 103683 / JCM 12257 / NCTC 11834 / 2561) protein is S-adenosylmethionine synthase.